A 500-amino-acid chain; its full sequence is Cholesterol 24-hydroxylase (500 aa).

Residues 3–23 (PGLLLLGSAVLLAFGLCCTFV) form a helical membrane-spanning segment. Position 437 (cysteine 437) interacts with heme.

This sequence belongs to the cytochrome P450 family. It depends on heme as a cofactor. Expressed in high level in the pyramidal cells of the hippocampus, Purkinje cells of the cerebellum, and neuronal cell bodies in layers II/III, V, and VI of the cortex. Expressed in hippocampal and cerebellar interneurons, in retinal ganglion cells, and in a subset of retinal cells localized to the inner nuclear layer (at protein level).

Its subcellular location is the endoplasmic reticulum membrane. It localises to the microsome membrane. The protein localises to the postsynapse. The protein resides in the presynapse. It is found in the cell projection. Its subcellular location is the dendrite. It carries out the reaction cholesterol + reduced [NADPH--hemoprotein reductase] + O2 = (24S)-hydroxycholesterol + oxidized [NADPH--hemoprotein reductase] + H2O + H(+). The catalysed reaction is cholestanol + reduced [NADPH--hemoprotein reductase] + O2 = (24S)-hydroxycholestanol + oxidized [NADPH--hemoprotein reductase] + H2O + H(+). It catalyses the reaction 7-dehydrocholesterol + reduced [NADPH--hemoprotein reductase] + O2 = cholesta-5,7-dien-3beta,24S-diol + oxidized [NADPH--hemoprotein reductase] + H2O + H(+). The enzyme catalyses 7-dehydrocholesterol + reduced [NADPH--hemoprotein reductase] + O2 = cholesta-5,7-dien-3beta,25-diol + oxidized [NADPH--hemoprotein reductase] + H2O + H(+). It carries out the reaction desmosterol + reduced [NADPH--hemoprotein reductase] + O2 = (24Z),26-hydroxydesmosterol + oxidized [NADPH--hemoprotein reductase] + H2O + H(+). The catalysed reaction is desmosterol + reduced [NADPH--hemoprotein reductase] + O2 = (24S)-25-epoxycholesterol + oxidized [NADPH--hemoprotein reductase] + H2O + H(+). It catalyses the reaction 4beta-hydroxycholesterol + reduced [NADPH--hemoprotein reductase] + O2 = 4beta,24S-dihydroxycholesterol + oxidized [NADPH--hemoprotein reductase] + H2O + H(+). The enzyme catalyses (24S)-hydroxycholesterol + reduced [NADPH--hemoprotein reductase] + O2 = (24S,25R)-24,26-dihydroxycholesterol + oxidized [NADPH--hemoprotein reductase] + H2O + H(+). It carries out the reaction (24S)-hydroxycholesterol + reduced [NADPH--hemoprotein reductase] + O2 = 24S,25-dihydroxycholesterol + oxidized [NADPH--hemoprotein reductase] + H2O + H(+). The catalysed reaction is 7alpha-hydroxycholesterol + reduced [NADPH--hemoprotein reductase] + O2 = (24S)-7alpha-dihydroxycholesterol + oxidized [NADPH--hemoprotein reductase] + H2O + H(+). It catalyses the reaction progesterone + reduced [NADPH--hemoprotein reductase] + O2 = 17alpha-hydroxyprogesterone + oxidized [NADPH--hemoprotein reductase] + H2O + H(+). The enzyme catalyses testosterone + reduced [NADPH--hemoprotein reductase] + O2 = 16beta,17beta-dihydroxyandrost-4-en-3-one + oxidized [NADPH--hemoprotein reductase] + H2O + H(+). It carries out the reaction testosterone + reduced [NADPH--hemoprotein reductase] + O2 = 2-hydroxytestosterone + oxidized [NADPH--hemoprotein reductase] + H2O + H(+). The catalysed reaction is testosterone + reduced [NADPH--hemoprotein reductase] + O2 = 6beta,17beta-dihydroxyandrost-4-en-3-one + oxidized [NADPH--hemoprotein reductase] + H2O + H(+). It participates in steroid metabolism; cholesterol degradation. The protein operates within lipid metabolism; C21-steroid hormone metabolism. Its function is as follows. P450 monooxygenase that plays a major role in cholesterol homeostasis in the brain. Primarily catalyzes the hydroxylation (with S stereochemistry) at C-24 of cholesterol side chain, triggering cholesterol diffusion out of neurons and its further degradation. By promoting constant cholesterol elimination in neurons, may activate the mevalonate pathway and coordinate the synthesis of new cholesterol and nonsterol isoprenoids involved in synaptic activity and learning. Further hydroxylates cholesterol derivatives and hormone steroids on both the ring and side chain of these molecules, converting them into active oxysterols involved in lipid signaling and biosynthesis. Acts as an epoxidase converting cholesta-5,24-dien-3beta-ol/desmosterol into (24S),25-epoxycholesterol, an abundant lipid ligand of nuclear NR1H2 and NR1H3 receptors shown to promote neurogenesis in developing brain. May also catalyze the oxidative metabolism of xenobiotics, such as clotrimazole. In Mus musculus (Mouse), this protein is Cholesterol 24-hydroxylase.